The sequence spans 152 residues: Superoxide dismutase [Cu-Zn] 1 (152 aa).

Cu cation contacts are provided by His45, His47, and His62. Cysteines 56 and 145 form a disulfide. The Zn(2+) site is built by His62, His70, His79, and Asp82. His119 contacts Cu cation.

It belongs to the Cu-Zn superoxide dismutase family. In terms of assembly, homodimer. It depends on Cu cation as a cofactor. Zn(2+) is required as a cofactor.

Its subcellular location is the cytoplasm. The catalysed reaction is 2 superoxide + 2 H(+) = H2O2 + O2. Functionally, destroys radicals which are normally produced within the cells and which are toxic to biological systems. The protein is Superoxide dismutase [Cu-Zn] 1 (SODCC.1) of Solanum lycopersicum (Tomato).